A 664-amino-acid polypeptide reads, in one-letter code: MFRLVQQQTLKSRVPNQFVSASRNSLNSQFRFNSAVALERNPQQDPTTAAPAKSSSDKRNSKKKYENNEIIERNVKKVRNLRRNIKFDNFKNSPNSPAFSKLNALDDCLARGLEASSSRAPDGKFLDQSSLFWDSVSSSMNIYRELVITGDLNNHRASRVIQLMHVALKVNRTQLTSMNKKPDYDSQSFHKEMTNYLCESLREISGDILANRVSVSEHGAAHLLSSFKELLLYEETLNIWKAAVNSENKDIVKSFMFPNVVGVVLPLLYENGTTFEEIKKLYEKSASNTTRSHGSPSLVLGMIKTSLAANENEHALSLFQEMCTSEGFGVSPYAVLTGTHLAFIGECKDLYVAKSFFERALSKDMPYKINLQVSSVKQLIQNIWDQTHDFNEVVDVWTKATKYYGKDVSHGISSSLNSKFISIFFENYVTDKAAGLQHLQELVTAYDEMKAIDEPFLNIILTKCTVWQDRNIIESIEKSYELYHIPKTIVTYRIILKAMGSISVPNDVIREKWVQLIQKADQIGQTYIANADWAALRDATVTYTQEQFKNGGSYEMTTSDSYNPALEAANASGAFDDFNEPTSGTKHADHLNTQTNKEDNDRILLYYQLVKRYGVYCRDPKQYARITSGIALNFEVAQPYLGLVNTMDVSSIYVPPLRNFHLNH.

The N-terminal 32 residues, 1–32 (MFRLVQQQTLKSRVPNQFVSASRNSLNSQFRF), are a transit peptide targeting the mitochondrion. Positions 38–68 (LERNPQQDPTTAAPAKSSSDKRNSKKKYENN) are disordered. Positions 55 to 68 (SSDKRNSKKKYENN) are enriched in basic and acidic residues.

The protein belongs to the RMD9 family. As to quaternary structure, monomer. In terms of processing, phosphorylated. Phosphorylation promotes binding to RNA.

The protein resides in the mitochondrion inner membrane. Binds the 3'-UTR of mitochondrial mRNAs. Involved in the processing or stability of mitochondrial mRNAs. This Kluyveromyces lactis (strain ATCC 8585 / CBS 2359 / DSM 70799 / NBRC 1267 / NRRL Y-1140 / WM37) (Yeast) protein is RNA-binding protein RMD9, mitochondrial (RMD9).